The chain runs to 305 residues: Sulfate adenylyltransferase subunit 2 1 (305 aa).

The disordered stretch occupies residues 283 to 305; that stretch reads RSGRAIDHDQAGSMERKKREGYF.

It belongs to the PAPS reductase family. CysD subfamily. As to quaternary structure, heterodimer composed of CysD, the smaller subunit, and CysN.

It carries out the reaction sulfate + ATP + H(+) = adenosine 5'-phosphosulfate + diphosphate. It functions in the pathway sulfur metabolism; hydrogen sulfide biosynthesis; sulfite from sulfate: step 1/3. With CysN forms the ATP sulfurylase (ATPS) that catalyzes the adenylation of sulfate producing adenosine 5'-phosphosulfate (APS) and diphosphate, the first enzymatic step in sulfur assimilation pathway. APS synthesis involves the formation of a high-energy phosphoric-sulfuric acid anhydride bond driven by GTP hydrolysis by CysN coupled to ATP hydrolysis by CysD. This chain is Sulfate adenylyltransferase subunit 2 1, found in Chromohalobacter salexigens (strain ATCC BAA-138 / DSM 3043 / CIP 106854 / NCIMB 13768 / 1H11).